The primary structure comprises 362 residues: MNSRVFNFGAGPAMLPEEILKEAQEEFLNWRNTGMSILEIGHRTPEIINLLSTAEQSLRELLNIPKNYHVLFLGGAARAQFAMIPMNLLQPGDEAAYFITGIWSKMAYHEANLLKQAYYLSNEEKEGFVSIPDYQKWELKSNTPYVYYTPNETINGVRFPYVPKTGGVPLVADMTSCLLSEPININQYGLIFAGAQKNIANAGLTIVIIHEDLLKNQPEPAIPTMLNYKNHAEHRSLYATPPVFNCYLASKMFEWIKTQGGIEGVFQRNCLKAAKLYQYLDSTDFYLTPVSKEARSIMNICFSLCYPDLEQKFLDMANKRGLKALKGHRFTGGLRASLYNAMPMAGVDALIEFMSEFAKENG.

Arg-43 lines the L-glutamate pocket. Pyridoxal 5'-phosphate-binding positions include 77–78 (AR), Trp-103, Thr-153, Asp-173, and Gln-196. Lys-197 bears the N6-(pyridoxal phosphate)lysine mark.

It belongs to the class-V pyridoxal-phosphate-dependent aminotransferase family. SerC subfamily. Homodimer. Pyridoxal 5'-phosphate is required as a cofactor.

It localises to the cytoplasm. It catalyses the reaction O-phospho-L-serine + 2-oxoglutarate = 3-phosphooxypyruvate + L-glutamate. It carries out the reaction 4-(phosphooxy)-L-threonine + 2-oxoglutarate = (R)-3-hydroxy-2-oxo-4-phosphooxybutanoate + L-glutamate. Its pathway is amino-acid biosynthesis; L-serine biosynthesis; L-serine from 3-phospho-D-glycerate: step 2/3. It participates in cofactor biosynthesis; pyridoxine 5'-phosphate biosynthesis; pyridoxine 5'-phosphate from D-erythrose 4-phosphate: step 3/5. Functionally, catalyzes the reversible conversion of 3-phosphohydroxypyruvate to phosphoserine and of 3-hydroxy-2-oxo-4-phosphonooxybutanoate to phosphohydroxythreonine. This chain is Phosphoserine aminotransferase, found in Legionella pneumophila (strain Paris).